Reading from the N-terminus, the 249-residue chain is Triosephosphate isomerase (249 aa).

Residue 9–11 participates in substrate binding; sequence NWK. His-95 (electrophile) is an active-site residue. Catalysis depends on Glu-165, which acts as the Proton acceptor. Residues Gly-171, Ser-211, and 232 to 233 contribute to the substrate site; that span reads GG.

It belongs to the triosephosphate isomerase family. Homodimer.

The protein localises to the cytoplasm. It catalyses the reaction D-glyceraldehyde 3-phosphate = dihydroxyacetone phosphate. It participates in carbohydrate biosynthesis; gluconeogenesis. Its pathway is carbohydrate degradation; glycolysis; D-glyceraldehyde 3-phosphate from glycerone phosphate: step 1/1. Its function is as follows. Involved in the gluconeogenesis. Catalyzes stereospecifically the conversion of dihydroxyacetone phosphate (DHAP) to D-glyceraldehyde-3-phosphate (G3P). In Chlorobium phaeobacteroides (strain DSM 266 / SMG 266 / 2430), this protein is Triosephosphate isomerase.